The sequence spans 1114 residues: Translation initiation factor IF-2 (1114 aa).

Disordered stretches follow at residues 69–102 (SIKK…PLLI) and 181–507 (INNN…KRRA). A compositionally biased stretch (basic and acidic residues) spans 85–96 (SKKETPLKDNSN). Over residues 181-198 (INNNVKSNESSQNISSAG) the composition is skewed to polar residues. Over residues 240–251 (INPNKQNNKQNI) the composition is skewed to low complexity. A compositionally biased stretch (polar residues) spans 252–261 (AFKQTGSNRI). Low complexity-rich tracts occupy residues 262–278 (GSPN…GLRN), 290–309 (NRQG…GLRN), and 321–337 (NRQG…NRPG). Positions 365 to 375 (NSEKDNKDKNN) are enriched in basic and acidic residues. Low complexity predominate over residues 376–385 (NAKQNINGPN). A compositionally biased stretch (basic and acidic residues) spans 417-431 (GKTDWDDSAKLEALR). The segment covering 489-505 (KQFKKKKKETTRQRQKR) has biased composition (basic residues). The tr-type G domain maps to 606–778 (RRPPVITVMG…ILLVSEVEDL (173 aa)). Positions 615–622 (GHVDHGKT) are G1. 615–622 (GHVDHGKT) contacts GTP. The segment at 640-644 (GITQH) is G2. The segment at 665–668 (DTPG) is G3. GTP is bound by residues 665-669 (DTPGH) and 719-722 (NKID). The G4 stretch occupies residues 719–722 (NKID). Residues 755–757 (SAI) form a G5 region.

The protein belongs to the TRAFAC class translation factor GTPase superfamily. Classic translation factor GTPase family. IF-2 subfamily.

It is found in the cytoplasm. Functionally, one of the essential components for the initiation of protein synthesis. Protects formylmethionyl-tRNA from spontaneous hydrolysis and promotes its binding to the 30S ribosomal subunits. Also involved in the hydrolysis of GTP during the formation of the 70S ribosomal complex. This is Translation initiation factor IF-2 from Prochlorococcus marinus (strain MIT 9301).